We begin with the raw amino-acid sequence, 397 residues long: Ribosomal RNA large subunit methyltransferase I (397 aa).

Residues 2–80 form the PUA domain; the sequence is SAAIYLVKGR…QDINRAFFVK (79 aa).

This sequence belongs to the methyltransferase superfamily. RlmI family.

It is found in the cytoplasm. The catalysed reaction is cytidine(1962) in 23S rRNA + S-adenosyl-L-methionine = 5-methylcytidine(1962) in 23S rRNA + S-adenosyl-L-homocysteine + H(+). Functionally, specifically methylates the cytosine at position 1962 (m5C1962) of 23S rRNA. The chain is Ribosomal RNA large subunit methyltransferase I from Vibrio vulnificus (strain CMCP6).